We begin with the raw amino-acid sequence, 430 residues long: Small ribosomal subunit protein uS9m (430 aa).

The transit peptide at 1–34 (MLSRLFLRHSNLRFVTLVSSKSNSQIFSSFIRPL) directs the protein to the mitochondrion. The tract at residues 32–97 (RPLSTNSSGG…GGEGKWPEEP (66 aa)) is disordered. The span at 39–48 (SGGGGNGDGN) shows a compositional bias: gly residues. The segment covering 68 to 79 (GPFSSDDSFGSS) has biased composition (low complexity). The span at 80–91 (GVAGSGLPGGEG) shows a compositional bias: gly residues.

The protein belongs to the universal ribosomal protein uS9 family. As to quaternary structure, interacts (via C terminus) with PIA2. Component of the mitochondrial ribosome small subunit. As to expression, expressed in root tips, young leaves, flowers and siliques.

The protein localises to the mitochondrion. Mitochondrial ribosomal protein required for central cell maturation. May work together with PIA2 in controlling female gametophyte development, possibly by regulating the expression of some mitochondrial proteins. This is Small ribosomal subunit protein uS9m from Arabidopsis thaliana (Mouse-ear cress).